The primary structure comprises 246 residues: E3 ubiquitin-protein ligase LubX (246 aa).

U-box domains follow at residues T36–Y109 and E131–E204.

In terms of assembly, interacts with host CLK1. Post-translationally, ubiquitinated in the presence of host E1 ubiquitin-activating enzyme, E2 ubiquitin-conjugating enzyme (UBE2D1 or UBE2D3) and ubiquitin.

Its subcellular location is the secreted. It localises to the host cell. The catalysed reaction is S-ubiquitinyl-[E2 ubiquitin-conjugating enzyme]-L-cysteine + [acceptor protein]-L-lysine = [E2 ubiquitin-conjugating enzyme]-L-cysteine + N(6)-ubiquitinyl-[acceptor protein]-L-lysine.. In terms of biological role, effector proteins function to alter host cell physiology and promote bacterial survival in host tissues. This protein is an E3 ubiquitin ligase that interferes with host's ubiquitination pathway. Acts in conjunction with host E2 ubiquitin-conjugating enzymes UBE2D1 (UBCH5A) or UBE2D3 (UBCH5C), and mediates polyubiquitination of host kinase CLK1. In Legionella pneumophila subsp. pneumophila (strain Philadelphia 1 / ATCC 33152 / DSM 7513), this protein is E3 ubiquitin-protein ligase LubX (lubX).